A 403-amino-acid chain; its full sequence is Aspartic protease PEP1 (403 aa).

Positions 1-20 (MVQISQIGAVLAVCSTLTVA) are cleaved as a signal peptide. A propeptide spans 21-67 (APTKGKARFNVPQVAVPMKAVHHPAVAYARALHKFGMKVPKAVSDAA) (activation peptide). Residues 82 to 400 (YVTQVTVGQG…DTEGPRIGFA (319 aa)) enclose the Peptidase A1 domain. Residue aspartate 98 is part of the active site. 2 N-linked (GlcNAc...) asparagine glycosylation sites follow: asparagine 159 and asparagine 270. Aspartate 293 is a catalytic residue. A disulfide bridge links cysteine 329 with cysteine 361.

The protein belongs to the peptidase A1 family.

Its subcellular location is the secreted. The catalysed reaction is Hydrolysis of proteins with broad specificity. Generally favors hydrophobic residues in P1 and P1', but also accepts Lys in P1, which leads to activation of trypsinogen. Does not clot milk.. Secreted aspartic endopeptidase that allows assimilation of proteinaceous substrates. Can catalyze hydrolysis of the major structural proteins of basement membrane, elastin, collagen, and laminin. Thought to play a significant role in virulence. This is Aspartic protease PEP1 (PEP1) from Arthroderma benhamiae (strain ATCC MYA-4681 / CBS 112371) (Trichophyton mentagrophytes).